The chain runs to 73 residues: Large ribosomal subunit protein uL29 (73 aa).

Positions 1–20 (MYKAKDLRDQSLEELEATHD) are disordered.

It belongs to the universal ribosomal protein uL29 family.

The polypeptide is Large ribosomal subunit protein uL29 (Protochlamydia amoebophila (strain UWE25)).